The primary structure comprises 771 residues: Heat shock transcription factor (771 aa).

Residues 1-70 (MTTNLYAIAG…GIGISKPGLS (70 aa)) are disordered. 2 stretches are compositionally biased toward low complexity: residues 11 to 23 (PSKPTTPTSTPSP) and 31 to 42 (LKSLTSLPTNPL). Positions 43-62 (NPQGTSTSNALTNQSSSTGI) are enriched in polar residues. Residues 78-168 (MKVPAFLNKL…PIELWEFANP (91 aa)) mediate DNA binding. The tract at residues 183–266 (RKNNRLSNSG…PPSHTSAGPL (84 aa)) is disordered. 2 stretches are compositionally biased toward low complexity: residues 189–199 (SNSGVGSSSSL) and 212–233 (SASAAAASGSGSGQIQQAISQG). Residues 238 to 262 (NHSTSGKYLITDGTTPGSAPPSHTS) show a composition bias toward polar residues. Residues 280–333 (GIAAIRQTQASIATDLRKLQASNEALWRQAYETQEKQRKHEETIDLIVSFLERL) form an involved in trimerization region. 2 stretches are compositionally biased toward basic and acidic residues: residues 350-372 (RGVGVRRDRDGREGRDSRDARFA) and 399-415 (TGEHGEIESPSSDDRLV). Disordered stretches follow at residues 350-513 (RGVG…SSNA), 590-634 (QALT…GSGT), and 708-771 (SGVG…SGLK). The span at 418–448 (GSNSEYSIPSVKRTSSSSHPLSLGQLGSSRF) shows a compositional bias: polar residues. Composition is skewed to low complexity over residues 497 to 511 (LSPLSDTDPLLPSSS) and 599 to 620 (HNPSLLNPNPNGNASTSASASA).

It belongs to the HSF family. As to quaternary structure, homotrimer. Homotrimerization increases the affinity of HSF1 to DNA. Interacts with transcriptional coregulator SSA1 on chromatin. Post-translationally, phosphorylated at high temperature.

Its subcellular location is the nucleus. In terms of biological role, DNA-binding transcription factor that specifically binds heat shock promoter elements (HSE) and activates transcription. Promotes thermotolerance by transiently regulating a subset of genes. Induces expression of STI, SSA1, SSA2, HSP78 and KAR2 during the heat response. This chain is Heat shock transcription factor, found in Cryptococcus neoformans var. grubii serotype A (strain H99 / ATCC 208821 / CBS 10515 / FGSC 9487) (Filobasidiella neoformans var. grubii).